The primary structure comprises 155 residues: Small ribosomal subunit protein uS7 (155 aa).

The protein belongs to the universal ribosomal protein uS7 family. Part of the 30S ribosomal subunit. Contacts proteins S9 and S11.

One of the primary rRNA binding proteins, it binds directly to 16S rRNA where it nucleates assembly of the head domain of the 30S subunit. Is located at the subunit interface close to the decoding center, probably blocks exit of the E-site tRNA. The chain is Small ribosomal subunit protein uS7 from Mycoplasma genitalium (strain ATCC 33530 / DSM 19775 / NCTC 10195 / G37) (Mycoplasmoides genitalium).